A 379-amino-acid polypeptide reads, in one-letter code: Sulfate adenylyltransferase (379 aa).

This sequence belongs to the sulfate adenylyltransferase family.

The catalysed reaction is sulfate + ATP + H(+) = adenosine 5'-phosphosulfate + diphosphate. It participates in sulfur metabolism; hydrogen sulfide biosynthesis; sulfite from sulfate: step 1/3. In Cenarchaeum symbiosum (strain A), this protein is Sulfate adenylyltransferase.